A 2194-amino-acid chain; its full sequence is Supervillin (2194 aa).

Residues 1–174 (MKRKERIARR…SSYSRTELSG (174 aa)) form an interaction with MYLK region. 8 disordered regions span residues 35 to 98 (LEED…TQSL), 118 to 335 (EKYG…QRRH), 388 to 414 (PESI…KVLE), 450 to 500 (EDRG…TERM), 513 to 563 (AVSQ…QTSK), 589 to 667 (RASR…KVDE), 685 to 719 (KSFD…QPVT), and 739 to 791 (HPVM…DSST). Ser-50 is modified (phosphoserine). Residues 87–98 (PYSSGIMDTQSL) are compositionally biased toward polar residues. 2 stretches are compositionally biased toward basic and acidic residues: residues 139–161 (SRKD…ESSR) and 181–192 (ESKDYGLHRSDG). Phosphoserine is present on residues Ser-245 and Ser-262. Composition is skewed to basic and acidic residues over residues 283–294 (PKHEWFLQKDSE) and 308–319 (KVREKLVREESA). A compositionally biased stretch (polar residues) spans 320-330 (RSSPELTSESL). A phosphoserine mark is found at Ser-321 and Ser-322. Positions 455–467 (GRSQEAPSGTEDL) are enriched in polar residues. Over residues 540-551 (PPQLQALKAKAP) the composition is skewed to low complexity. Basic and acidic residues-rich tracts occupy residues 592–615 (RKPE…ERGS) and 626–635 (ENRKTSERFR). Phosphoserine occurs at positions 652 and 686. Residues 704–714 (QRLRRLQDRSH) show a composition bias toward basic and acidic residues. 2 positions are modified to phosphoserine: Ser-747 and Ser-781. The segment covering 770-782 (LARDQTNESKDSA) has biased composition (basic and acidic residues). Tyr-829 bears the Phosphotyrosine mark. Thr-831 carries the phosphothreonine modification. Ser-893, Ser-899, Ser-903, Ser-947, Ser-979, and Ser-1031 each carry phosphoserine. Residues 1036–1077 (EFGEPTSEQTGAAAGKPAAPTATPVSWKPQDPSEQPQEKRYQ) form a disordered region. Over residues 1045 to 1059 (TGAAAGKPAAPTATP) the composition is skewed to low complexity. Phosphoserine is present on residues Ser-1099 and Ser-1205. Thr-1210 is modified (phosphothreonine). Phosphoserine is present on residues Ser-1214, Ser-1302, and Ser-1385. Residues 1399 to 1667 (SNVSLRSVNL…KFLDWTELKR (269 aa)) form an interaction with NEB region. Gelsolin-like repeat units follow at residues 1421 to 1520 (KKLM…LGGQ), 1540 to 1662 (IETN…FLDW), 1732 to 1842 (ISVD…FQGG), 1861 to 1962 (WRLY…LGRR), and 1995 to 2102 (ATEF…FPSW). An HP domain is found at 2131–2194 (KLCKTIYPLA…VNLKKAKGLF (64 aa)).

It belongs to the villin/gelsolin family. In terms of assembly, associates with F-actin. Interacts with NEB. Interacts with MYH9. Interacts with MYLK. Interacts with TASOR. As to quaternary structure, interacts with TRIP6 and DYNLT1. Interacts with KIF14; at midbody during cytokinesis.

The protein localises to the cell membrane. The protein resides in the cytoplasm. It localises to the cytoskeleton. Its subcellular location is the cell projection. It is found in the invadopodium. The protein localises to the podosome. The protein resides in the midbody. It localises to the cleavage furrow. Forms a high-affinity link between the actin cytoskeleton and the membrane. Is among the first costameric proteins to assemble during myogenesis and it contributes to myogenic membrane structure and differentiation. Appears to be involved in myosin II assembly. May modulate myosin II regulation through MLCK during cell spreading, an initial step in cell migration. May play a role in invadopodial function. In terms of biological role, may be involved in modulation of focal adhesions. Supervillin-mediated down-regulation of focal adhesions involves binding to TRIP6. Plays a role in cytokinesis through KIF14 interaction. This Bos taurus (Bovine) protein is Supervillin.